Consider the following 323-residue polypeptide: Pathogenicity locus probable regulatory protein WtsA (323 aa).

The Sigma-54 factor interaction domain occupies 41-251; the sequence is VAPLEIDLVL…ELKTAAKRFT (211 aa). Residues 52–59 and 123–132 contribute to the ATP site; these read GETGTGKD and EIDSMPLSLQ. The segment at residues 293 to 312 is a DNA-binding region (H-T-H motif); the sequence is IDEAAMELGMPLRTLYHRIK.

Functionally, positive activator of wtsB involved in plant pathogenicity. Probably interacts with sigma-54. The chain is Pathogenicity locus probable regulatory protein WtsA (wtsA) from Pantoea stewartii subsp. stewartii (Erwinia stewartii).